The following is a 153-amino-acid chain: uncharacterized protein (153 aa).

The interval 19-46 (EKSTRLEEDAMESEPLAGTKTRGRGRRR) is disordered.

This is an uncharacterized protein from Homo sapiens (Human).